A 748-amino-acid chain; its full sequence is Junctophilin-3 (748 aa).

Over 1–727 (MSSGGRFNFD…LKSSTGSAPI (727 aa)) the chain is Cytoplasmic. MORN repeat units lie at residues 15-37 (YCGG…KGQG), 39-60 (YTGS…SGNT), 61-82 (YQGT…GKWV), 83-105 (YKGE…GNGA), 107-129 (YEGT…DGGT), and 130-152 (YQGQ…PYGM). The interval 230 to 259 (SKSSLASQRSKQSSFRSEAGMSTVSSTASD) is disordered. The segment covering 231–244 (KSSLASQRSKQSSF) has biased composition (low complexity). Over residues 249–259 (GMSTVSSTASD) the composition is skewed to polar residues. MORN repeat units follow at residues 288–310 (YVGE…DGLK) and 311–333 (YEGE…DGTK). A disordered region spans residues 416-496 (AKEFSPSFQH…TPPPAPAARN (81 aa)). Serine 440 carries the post-translational modification Phosphoserine. Residues 448-457 (STGTPLQQES) are compositionally biased toward polar residues. Threonine 451 carries the phosphothreonine modification. Serine 457 carries the phosphoserine modification. Threonine 471 bears the Phosphothreonine mark. A phosphoserine mark is found at serine 475 and serine 506. Disordered stretches follow at residues 526–597 (CARS…SPGG) and 624–649 (HPQK…EDRG). The span at 639-649 (LGDDHRPEDRG) shows a compositional bias: basic and acidic residues. 2 positions are modified to phosphoserine: serine 703 and serine 710. The chain crosses the membrane as a helical; Anchor for type IV membrane protein span at residues 728 to 748 (LVVMVILLNIGVAILFINFFI).

This sequence belongs to the junctophilin family. In terms of tissue distribution, specifically expressed in brain.

It localises to the cell membrane. It is found in the endoplasmic reticulum membrane. Functionally, junctophilins contribute to the formation of junctional membrane complexes (JMCs) which link the plasma membrane with the endoplasmic or sarcoplasmic reticulum in excitable cells. Provides a structural foundation for functional cross-talk between the cell surface and intracellular calcium release channels. JPH3 is brain-specific and appears to have an active role in certain neurons involved in motor coordination and memory. The sequence is that of Junctophilin-3 (JPH3) from Homo sapiens (Human).